We begin with the raw amino-acid sequence, 367 residues long: Chorismate synthase (367 aa).

Arginine 48 serves as a coordination point for NADP(+). FMN is bound by residues 125 to 127 (RSS), 243 to 244 (NA), glycine 283, 298 to 302 (KPTSS), and arginine 324.

It belongs to the chorismate synthase family. In terms of assembly, homotetramer. Requires FMNH2 as cofactor.

The enzyme catalyses 5-O-(1-carboxyvinyl)-3-phosphoshikimate = chorismate + phosphate. It functions in the pathway metabolic intermediate biosynthesis; chorismate biosynthesis; chorismate from D-erythrose 4-phosphate and phosphoenolpyruvate: step 7/7. Catalyzes the anti-1,4-elimination of the C-3 phosphate and the C-6 proR hydrogen from 5-enolpyruvylshikimate-3-phosphate (EPSP) to yield chorismate, which is the branch point compound that serves as the starting substrate for the three terminal pathways of aromatic amino acid biosynthesis. This reaction introduces a second double bond into the aromatic ring system. The polypeptide is Chorismate synthase (Psychrobacter sp. (strain PRwf-1)).